Reading from the N-terminus, the 156-residue chain is Protein archease-like (156 aa).

Residues Asp25, Asp155, and Ile156 each coordinate Ca(2+).

It belongs to the archease family.

Component of the tRNA-splicing ligase complex required to facilitate the enzymatic turnover of catalytic subunit RtcB. Plays an important role in a RNA repair and splicing pathway which controls axon regeneration in response to peripheral (PNS) and central nervous system (CNS) injury, by activating splicing of Xbp1 to promote axon regeneration in response to axotomy. In Drosophila melanogaster (Fruit fly), this protein is Protein archease-like.